Consider the following 121-residue polypeptide: Small ribosomal subunit protein bS6 (121 aa).

The segment at 99–121 is disordered; it reads PLPAPRVAPGTEAPAEPEAAAPA. The span at 110–121 shows a compositional bias: low complexity; the sequence is EAPAEPEAAAPA.

The protein belongs to the bacterial ribosomal protein bS6 family.

Binds together with bS18 to 16S ribosomal RNA. The sequence is that of Small ribosomal subunit protein bS6 from Synechococcus sp. (strain CC9311).